The chain runs to 281 residues: Radiation response metalloprotease IrrE (281 aa).

His82 is a Zn(2+) binding site. Glu83 is a catalytic residue. Residues His86 and Glu113 each coordinate Zn(2+). A disordered region spans residues 262–281 (LPAGRSEPDADKPEAPGDQS). Basic and acidic residues predominate over residues 267–281 (SEPDADKPEAPGDQS).

As to quaternary structure, interacts with DdrOC.

Protease activity is inhibited by EDTA. Plays a central regulatory role in DNA repair and protection pathways in response to radiation stress. Acts as a site-specific metalloprotease that cleaves and inactivates the repressor proteins DdrOC and DdrOP3, resulting in induced expression of genes required for DNA repair and cell survival after exposure to radiation. This Deinococcus deserti (strain DSM 17065 / CIP 109153 / LMG 22923 / VCD115) protein is Radiation response metalloprotease IrrE.